Consider the following 129-residue polypeptide: Small ribosomal subunit protein uS9 (129 aa).

Belongs to the universal ribosomal protein uS9 family.

The chain is Small ribosomal subunit protein uS9 from Pelodictyon phaeoclathratiforme (strain DSM 5477 / BU-1).